Reading from the N-terminus, the 393-residue chain is Myb-related transcription factor, partner of profilin (393 aa).

The span at 1 to 11 (MASATAAAAPG) shows a compositional bias: low complexity. The interval 1–21 (MASATAAAAPGEAEETTRLRK) is disordered. In terms of domain architecture, Myb-like spans 16-88 (TTRLRKPRFS…EVQKRWNDFK (73 aa)). Positions 87 to 90 (FKRR) match the Nuclear localization signal motif. Disordered stretches follow at residues 125 to 254 (GPGV…EQSL), 290 to 323 (PLLPGTPADPLPPPPPPPPPPPPKPVLPPSAPKV), and 348 to 393 (IISP…WKSP). The segment covering 142 to 157 (AAASSQPQASTASTQR) has biased composition (low complexity). Residues 160-171 (LSEDRRQDRRAD) are compositionally biased toward basic and acidic residues. Residues 173–184 (PAQSKGGSSSPE) are compositionally biased toward polar residues. 4 stretches are compositionally biased toward pro residues: residues 219 to 229 (PPLPAPPPPPT), 238 to 247 (SPSPTPPRPT), 296 to 320 (PADPLPPPPPPPPPPPPKPVLPPSA), and 359 to 368 (KPLPPAPPLP). A compositionally biased stretch (basic residues) spans 375 to 393 (HKRRKGFPTRKRRGRWKSP). Short sequence motifs (nuclear localization signal) lie at residues 376 to 379 (KRRK) and 384 to 387 (RKRR).

In terms of assembly, interacts with PFN1. Homodimer and heterodimer with PFN1. Ubiquitous. Highly expressed in brain, liver and testis. Moderate expression in heart, lung and skeletal muscle. Low expression in spleen and kidney.

It localises to the nucleus. In terms of biological role, transcriptional repressor; DNA-binding protein that specifically recognizes the core sequence 5'-YAAC[GT]G-3'. Dimerization with PFN1 reduces its DNA-binding capacity. The polypeptide is Myb-related transcription factor, partner of profilin (Mypop) (Mus musculus (Mouse)).